Reading from the N-terminus, the 152-residue chain is Male-specific protein scotti (152 aa).

Belongs to the male-specific scotti family.

Post-meiotically transcribed gene that has a role in late spermiogenesis; required for actin cone progression during spermatid individualization. In Drosophila mojavensis (Fruit fly), this protein is Male-specific protein scotti.